A 143-amino-acid chain; its full sequence is uncharacterized protein (143 aa).

The interval 1–37 is disordered; the sequence is MSAPASSSAIAPSQPTAPGHARHSASWSASASDPSGA.

It belongs to the dynein light chain Tctex-type family.

This is an uncharacterized protein from Mycosarcoma maydis (Corn smut fungus).